Reading from the N-terminus, the 46-residue chain is Replication-associated protein (46 aa).

In terms of biological role, seems to play a role in virus replication. This chain is Replication-associated protein, found in Solanum tuberosum (Potato).